The following is a 558-amino-acid chain: Putative ABC transporter ATP-binding protein SAG1633 (558 aa).

2 consecutive ABC transporter domains span residues 5–246 (IEWK…GIRE) and 295–527 (LSVQ…THLK). ATP contacts are provided by residues 39 to 46 (GPSGSGKS) and 328 to 335 (GKNGAGKS).

It belongs to the ABC transporter superfamily.

The protein resides in the cell membrane. Functionally, probably part of an ABC transporter complex. Responsible for energy coupling to the transport system. The polypeptide is Putative ABC transporter ATP-binding protein SAG1633 (Streptococcus agalactiae serotype V (strain ATCC BAA-611 / 2603 V/R)).